Reading from the N-terminus, the 316-residue chain is tRNA-cytidine(32) 2-sulfurtransferase (316 aa).

A PP-loop motif motif is present at residues 58 to 63 (SGGKDS). Residues C133, C136, and C224 each coordinate [4Fe-4S] cluster.

It belongs to the TtcA family. Homodimer. Mg(2+) is required as a cofactor. Requires [4Fe-4S] cluster as cofactor.

Its subcellular location is the cytoplasm. It catalyses the reaction cytidine(32) in tRNA + S-sulfanyl-L-cysteinyl-[cysteine desulfurase] + AH2 + ATP = 2-thiocytidine(32) in tRNA + L-cysteinyl-[cysteine desulfurase] + A + AMP + diphosphate + H(+). It functions in the pathway tRNA modification. Its function is as follows. Catalyzes the ATP-dependent 2-thiolation of cytidine in position 32 of tRNA, to form 2-thiocytidine (s(2)C32). The sulfur atoms are provided by the cysteine/cysteine desulfurase (IscS) system. This Aromatoleum aromaticum (strain DSM 19018 / LMG 30748 / EbN1) (Azoarcus sp. (strain EbN1)) protein is tRNA-cytidine(32) 2-sulfurtransferase.